We begin with the raw amino-acid sequence, 424 residues long: Enolase (424 aa).

Glutamine 162 contributes to the (2R)-2-phosphoglycerate binding site. The active-site Proton donor is the glutamate 204. Positions 241, 284, and 311 each coordinate Mg(2+). Positions 336, 365, 366, and 387 each coordinate (2R)-2-phosphoglycerate. Residue lysine 336 is the Proton acceptor of the active site.

It belongs to the enolase family. The cofactor is Mg(2+).

Its subcellular location is the cytoplasm. The protein resides in the secreted. It is found in the cell surface. It catalyses the reaction (2R)-2-phosphoglycerate = phosphoenolpyruvate + H2O. It functions in the pathway carbohydrate degradation; glycolysis; pyruvate from D-glyceraldehyde 3-phosphate: step 4/5. In terms of biological role, catalyzes the reversible conversion of 2-phosphoglycerate (2-PG) into phosphoenolpyruvate (PEP). It is essential for the degradation of carbohydrates via glycolysis. The polypeptide is Enolase (Rhizobium johnstonii (strain DSM 114642 / LMG 32736 / 3841) (Rhizobium leguminosarum bv. viciae)).